We begin with the raw amino-acid sequence, 509 residues long: Ethanolamine-phosphate phospho-lyase (509 aa).

Residue Lys-279 is modified to N6-(pyridoxal phosphate)lysine. Residues 451–474 (EKTSAKRKVHNENSGDTNAKEKET) show a composition bias toward basic and acidic residues. The tract at residues 451–509 (EKTSAKRKVHNENSGDTNAKEKETCSSNSQERNPNDHAYRQSNGLHPESPTFTRKRIRT) is disordered.

This sequence belongs to the class-III pyridoxal-phosphate-dependent aminotransferase family. In terms of assembly, homotetramer. Requires pyridoxal 5'-phosphate as cofactor.

The protein localises to the mitochondrion. It carries out the reaction phosphoethanolamine + H2O = acetaldehyde + NH4(+) + phosphate. Functionally, catalyzes the pyridoxal-phosphate-dependent breakdown of phosphoethanolamine, converting it to ammonia, inorganic phosphate and acetaldehyde. This is Ethanolamine-phosphate phospho-lyase (etnppl) from Xenopus laevis (African clawed frog).